Reading from the N-terminus, the 505-residue chain is RNA-splicing ligase RtcB homolog (505 aa).

Residues D119, C122, H227, and H259 each coordinate Mn(2+). Position 226–230 (226–230 (NHYAE)) interacts with GMP. S300 is subject to Phosphoserine. Residue H353 coordinates Mn(2+). GMP-binding positions include 353 to 354 (HN), 402 to 405 (GGTM), S409, and 428 to 431 (HGAG). H428 serves as the catalytic GMP-histidine intermediate. A Glycyl lysine isopeptide (Lys-Gly) (interchain with G-Cter in SUMO2) cross-link involves residue K496. Residue K504 coordinates GMP.

This sequence belongs to the RtcB family. Catalytic component of the tRNA-splicing ligase complex. Mn(2+) serves as cofactor.

The protein localises to the nucleus. The protein resides in the cytoplasm. It catalyses the reaction a 3'-end 3'-phospho-ribonucleotide-RNA + a 5'-end dephospho-ribonucleoside-RNA + GTP = a ribonucleotidyl-ribonucleotide-RNA + GMP + diphosphate. It carries out the reaction a 3'-end 2',3'-cyclophospho-ribonucleotide-RNA + a 5'-end dephospho-ribonucleoside-RNA + GTP + H2O = a ribonucleotidyl-ribonucleotide-RNA + GMP + diphosphate + H(+). Catalytic subunit of the tRNA-splicing ligase complex that acts by directly joining spliced tRNA halves to mature-sized tRNAs by incorporating the precursor-derived splice junction phosphate into the mature tRNA as a canonical 3',5'-phosphodiester. May act as an RNA ligase with broad substrate specificity, and may function toward other RNAs. The protein is RNA-splicing ligase RtcB homolog of Sus scrofa (Pig).